We begin with the raw amino-acid sequence, 419 residues long: UDP-N-acetylglucosamine 1-carboxyvinyltransferase (419 aa).

22 to 23 contacts phosphoenolpyruvate; the sequence is KN. R95 contributes to the UDP-N-acetyl-alpha-D-glucosamine binding site. The active-site Proton donor is C119. A 2-(S-cysteinyl)pyruvic acid O-phosphothioketal modification is found at C119. 2 residues coordinate UDP-N-acetyl-alpha-D-glucosamine: D308 and I330.

Belongs to the EPSP synthase family. MurA subfamily.

It is found in the cytoplasm. The catalysed reaction is phosphoenolpyruvate + UDP-N-acetyl-alpha-D-glucosamine = UDP-N-acetyl-3-O-(1-carboxyvinyl)-alpha-D-glucosamine + phosphate. It functions in the pathway cell wall biogenesis; peptidoglycan biosynthesis. Its function is as follows. Cell wall formation. Adds enolpyruvyl to UDP-N-acetylglucosamine. The chain is UDP-N-acetylglucosamine 1-carboxyvinyltransferase from Rickettsia bellii (strain OSU 85-389).